A 248-amino-acid polypeptide reads, in one-letter code: 3-oxoacyl-[acyl-carrier-protein] reductase FabG (248 aa).

Residues 14–17 (GGSR), 65–66 (DV), and Asn-92 contribute to the NADP(+) site. Ser-144 lines the substrate pocket. The active-site Proton acceptor is Tyr-157. NADP(+) contacts are provided by residues 157–161 (YAAAK) and Ile-190.

Belongs to the short-chain dehydrogenases/reductases (SDR) family. Homotetramer.

It carries out the reaction a (3R)-hydroxyacyl-[ACP] + NADP(+) = a 3-oxoacyl-[ACP] + NADPH + H(+). It functions in the pathway lipid metabolism; fatty acid biosynthesis. In terms of biological role, catalyzes the NADPH-dependent reduction of beta-ketoacyl-ACP substrates to beta-hydroxyacyl-ACP products, the first reductive step in the elongation cycle of fatty acid biosynthesis. The sequence is that of 3-oxoacyl-[acyl-carrier-protein] reductase FabG (fabG) from Chlamydia muridarum (strain MoPn / Nigg).